We begin with the raw amino-acid sequence, 3034 residues long: Cadherin EGF LAG seven-pass G-type receptor 1 (3034 aa).

Positions 1–29 (MAPSSPRVLPALVLLAAAALPALELGAAA) are cleaved as a signal peptide. The Extracellular portion of the chain corresponds to 30-2484 (WELRVPGGAR…REHGEVLPLK (2455 aa)). The segment covering 222–243 (GTPSESPSVSPSLLNLSQPRAG) has biased composition (low complexity). The tract at residues 222–267 (GTPSESPSVSPSLLNLSQPRAGVVRRSRRGTGSSTSPQFPLPSYQV) is disordered. A glycan (N-linked (GlcNAc...) asparagine) is linked at Asn-236. 9 consecutive Cadherin domains span residues 261-368 (PLPS…SPVF), 369-474 (EQSE…YPQF), 475-580 (SEKR…APIF), 581-702 (VSSP…DPMF), 703-804 (TQPV…RPVF), 805-907 (QSSH…APRF), 908-1014 (LRDF…PPVF), 1015-1116 (EKDE…PPEL), and 1121-1239 (ILFN…SPLL). 3 N-linked (GlcNAc...) asparagine glycosylation sites follow: Asn-561, Asn-649, and Asn-793. N-linked (GlcNAc...) asparagine glycans are attached at residues Asn-1129, Asn-1154, Asn-1228, Asn-1264, Asn-1274, and Asn-1302. Residues 1318 to 1376 (DDNICLREPCENYMKCVSVLRFDSSAPFISSTTVLFRPIHPITGLRCRCPPGFTGDYCE) form the EGF-like 1; calcium-binding domain. 9 cysteine pairs are disulfide-bonded: Cys-1322–Cys-1333, Cys-1327–Cys-1364, Cys-1366–Cys-1375, Cys-1382–Cys-1393, Cys-1387–Cys-1402, Cys-1404–Cys-1413, Cys-1422–Cys-1433, Cys-1427–Cys-1443, and Cys-1445–Cys-1455. Residues 1378–1414 (EIDLCYSNPCGANGRCRSREGGYTCECFEDFTGEHCQ) form the EGF-like 2; calcium-binding domain. The EGF-like 3; calcium-binding domain occupies 1418 to 1456 (RSGRCASGVCKNGGTCVNLLIGGFHCVCPPGEYEHPYCE). In terms of domain architecture, Laminin G-like 1 spans 1457–1661 (VSTRSFPPQS…IANNGTRAGC (205 aa)). N-linked (GlcNAc...) asparagine glycans are attached at residues Asn-1591, Asn-1638, and Asn-1655. Cystine bridges form between Cys-1635-Cys-1661, Cys-1668-Cys-1679, Cys-1673-Cys-1688, Cys-1690-Cys-1699, Cys-1855-Cys-1885, Cys-1891-Cys-1902, Cys-1896-Cys-1911, Cys-1913-Cys-1922, Cys-1926-Cys-1937, Cys-1931-Cys-1949, Cys-1951-Cys-1960, Cys-1968-Cys-1981, and Cys-1983-Cys-1993. An EGF-like 4; calcium-binding domain is found at 1664 to 1700 (QRNFCDGTSCQNGGTCVNRWNTYLCECPLRFGGKNCE). Asn-1681 bears the (3R)-3-hydroxyasparagine mark. The 182-residue stretch at 1704–1885 (PHPQRFTGES…ALKVRVKDGC (182 aa)) folds into the Laminin G-like 2 domain. The EGF-like 5; calcium-binding domain maps to 1887–1922 (VEDPCASSPCPPHSHCRDTWDSYSCICDRGYFGKKC). At Asp-1904 the chain carries (3R)-3-hydroxyaspartate. Residues 1923-1961 (VDACLLNPCKHVAACVRSPNTPRGYSCECGPGHYGQYCE) enclose the EGF-like 6; calcium-binding domain. Positions 1962 to 1994 (NKVDLPCPKGWWGNPVCGPCHCAVSQGFDPDCN) constitute an EGF-like 7; calcium-binding domain. The N-linked (GlcNAc...) asparagine glycan is linked to Asn-1994. One can recognise an EGF-like 8; calcium-binding domain in the interval 1996 to 2031 (TNGQCQCKENYYKPPAQDACLPCDCFPHGSHSRACD). Intrachain disulfides connect Cys-2000-Cys-2015, Cys-2002-Cys-2018, Cys-2020-Cys-2030, Cys-2039-Cys-2048, and Cys-2051-Cys-2063. The Laminin EGF-like domain occupies 2018–2065 (CDCFPHGSHSRACDMDTGQCACKPGVIGRQCNRCDNPFAEVTSLGCEV). Asn-2118, Asn-2137, Asn-2144, Asn-2155, Asn-2160, and Asn-2272 each carry an N-linked (GlcNAc...) asparagine glycan. The interval 2295 to 2346 (SVSFPADTFKPPEKKEGPVVRLTNRRTTPLTAQPEPRAERETSSSRRRRHPD) is disordered. The GAIN-B domain maps to 2312–2476 (PVVRLTNRRT…AVLMDISRRE (165 aa)). Intrachain disulfides connect Cys-2426–Cys-2458 and Cys-2446–Cys-2460. Residues 2426 to 2476 (CVFWNHSLDTGGTGGWSAKGCELLSRNRTHVTCQCSHSASCAVLMDISRRE) form a GPS region. Asn-2430 and Asn-2452 each carry an N-linked (GlcNAc...) asparagine glycan. The helical transmembrane segment at 2485–2505 (IITYAALSLSLVALLVAFVLL) threads the bilayer. The Cytoplasmic segment spans residues 2506–2516 (SLVRTLRSNLH). Residues 2517-2537 (SIHKNLITALFFSQLIFMVGI) form a helical membrane-spanning segment. The N-linked (GlcNAc...) asparagine glycan is linked to Asn-2538. The Extracellular portion of the chain corresponds to 2538–2542 (NQTEN). A helical membrane pass occupies residues 2543–2563 (PFLCTVVAILLHYVSMGTFAW). At 2564–2587 (TLVENLHVYRMLTEVRNIDTGPMR) the chain is on the cytoplasmic side. A helical transmembrane segment spans residues 2588–2608 (FYHVVGWGIPAIVTGLAVGLD). Residues 2609–2625 (PQGYGNPDFCWLSLQDT) lie on the Extracellular side of the membrane. A helical membrane pass occupies residues 2626–2646 (LIWSFAGPVGTVIIINTVIFV). Residues 2647–2670 (LSAKVSCQRKHHYYERKGVVSMLR) lie on the Cytoplasmic side of the membrane. The helical transmembrane segment at 2671–2691 (TAFLLLLLVTATWLLGLLAVN) threads the bilayer. Over 2692–2694 (SDT) the chain is Extracellular. Residues 2695 to 2715 (LSFHYLFAAFSCLQGIFVLLF) traverse the membrane as a helical segment. The Cytoplasmic segment spans residues 2716–3034 (HCVAHREVRK…QANGSDSEKP (319 aa)). The interval 2774–3034 (TASLDSTTRD…QANGSDSEKP (261 aa)) is disordered. Ser-2776, Ser-2779, Ser-2886, and Ser-2888 each carry phosphoserine. Residues 2893 to 2909 (TEPHLKVETKVSVELHR) are compositionally biased toward basic and acidic residues. Low complexity predominate over residues 2976-2986 (SPTSSRTSSLG). Over residues 3003–3012 (PRREPGREHL) the composition is skewed to basic and acidic residues. Residues 3020–3034 (RTGSAQANGSDSEKP) show a composition bias toward polar residues.

It belongs to the G-protein coupled receptor 2 family. LN-TM7 subfamily. Post-translationally, the iron and 2-oxoglutarate dependent 3-hydroxylation of aspartate and asparagine is (R) stereospecific within EGF domains. As to expression, expressed in the brain, where it is localized principally in the ependymal cell layer, choroid plexus and the area postrema. Also found in spinal cord and in the eye.

The protein localises to the cell membrane. Receptor that may have an important role in cell/cell signaling during nervous system formation. The polypeptide is Cadherin EGF LAG seven-pass G-type receptor 1 (Celsr1) (Mus musculus (Mouse)).